The primary structure comprises 310 residues: Protein-L-isoaspartate O-methyltransferase (310 aa).

Disordered regions lie at residues 1–44 and 67–88; these read MSGE…DKPA and AKPATAPKPTAPKPALPKPAAP. Residues 14-29 show a composition bias toward basic and acidic residues; the sequence is EDLKRAPRKSEGRPGE. The span at 32 to 44 shows a compositional bias: low complexity; the sequence is AAGAVPKAADKPA. The segment covering 75–86 has biased composition (pro residues); sequence PTAPKPALPKPA. Ser-157 is an active-site residue.

The protein belongs to the methyltransferase superfamily. L-isoaspartyl/D-aspartyl protein methyltransferase family.

The protein localises to the cytoplasm. The catalysed reaction is [protein]-L-isoaspartate + S-adenosyl-L-methionine = [protein]-L-isoaspartate alpha-methyl ester + S-adenosyl-L-homocysteine. In terms of biological role, catalyzes the methyl esterification of L-isoaspartyl residues in peptides and proteins that result from spontaneous decomposition of normal L-aspartyl and L-asparaginyl residues. It plays a role in the repair and/or degradation of damaged proteins. The polypeptide is Protein-L-isoaspartate O-methyltransferase (Burkholderia orbicola (strain MC0-3)).